The primary structure comprises 570 residues: Proline--tRNA ligase (570 aa).

The protein belongs to the class-II aminoacyl-tRNA synthetase family. ProS type 1 subfamily. In terms of assembly, homodimer.

The protein resides in the cytoplasm. The enzyme catalyses tRNA(Pro) + L-proline + ATP = L-prolyl-tRNA(Pro) + AMP + diphosphate. In terms of biological role, catalyzes the attachment of proline to tRNA(Pro) in a two-step reaction: proline is first activated by ATP to form Pro-AMP and then transferred to the acceptor end of tRNA(Pro). As ProRS can inadvertently accommodate and process non-cognate amino acids such as alanine and cysteine, to avoid such errors it has two additional distinct editing activities against alanine. One activity is designated as 'pretransfer' editing and involves the tRNA(Pro)-independent hydrolysis of activated Ala-AMP. The other activity is designated 'posttransfer' editing and involves deacylation of mischarged Ala-tRNA(Pro). The misacylated Cys-tRNA(Pro) is not edited by ProRS. The polypeptide is Proline--tRNA ligase (Thermoanaerobacter pseudethanolicus (strain ATCC 33223 / 39E) (Clostridium thermohydrosulfuricum)).